A 491-amino-acid polypeptide reads, in one-letter code: UDP-N-acetylmuramate--L-alanine ligase (491 aa).

Residue 126-132 (GTHGKTT) participates in ATP binding.

Belongs to the MurCDEF family.

The protein localises to the cytoplasm. The catalysed reaction is UDP-N-acetyl-alpha-D-muramate + L-alanine + ATP = UDP-N-acetyl-alpha-D-muramoyl-L-alanine + ADP + phosphate + H(+). The protein operates within cell wall biogenesis; peptidoglycan biosynthesis. Functionally, cell wall formation. The polypeptide is UDP-N-acetylmuramate--L-alanine ligase (Yersinia enterocolitica serotype O:8 / biotype 1B (strain NCTC 13174 / 8081)).